We begin with the raw amino-acid sequence, 305 residues long: Transmembrane epididymal protein 1 (305 aa).

A helical transmembrane segment spans residues 4–24 (FIGHISPGLFLVFYGLYQAII). Residue Asn32 is glycosylated (N-linked (GlcNAc...) asparagine). 6 helical membrane passes run 51–71 (LWQI…LIVY), 100–120 (LTMF…RSVL), 124–144 (LVLL…LLLV), 159–179 (SLLI…LWAP), 187–207 (IETF…FILF), and 223–243 (IMLV…CMLG). The tract at residues 285–305 (EQQDRDDQAPLLSKSSPCDRA) is disordered.

The protein belongs to the TMEM45 family.

The protein resides in the membrane. The protein is Transmembrane epididymal protein 1 (Teddm1) of Rattus norvegicus (Rat).